Consider the following 76-residue polypeptide: Esculentin-2-ALa (76 aa).

The signal sequence occupies residues 1 to 22; sequence MFTLKKSMLLLFFLGTISLSLC. Positions 23–39 are excised as a propeptide; sequence EEERNADEDDGEKEVKR. C70 and C76 are joined by a disulfide.

In terms of tissue distribution, expressed by the skin glands.

It localises to the secreted. Antimicrobial peptide with activity against Gram-positive and Gram-negative bacteria and against fungi. Has been tested against S.aureus (MIC=2.5 ug/mL), B.pumilus (MIC=2.5 ug/mL), B.cereus (MIC=7.5 ug/mL), E.coli (MIC=12.5 ug/mL), B.dysenteriae (MIC=7.5 ug/mL), A.cacoaceticus (MIC=25.0 ug/mL), P.aeruginosa (MIC=50.0 ug/mL) and C.albicans (MIC=2.5 ug/mL). Also shows a weak hemolytic activity. The sequence is that of Esculentin-2-ALa from Amolops loloensis (Lolokou Sucker Frog).